The following is a 20-amino-acid chain: Fibrinogen beta chain (20 aa).

The interval 1 to 20 (ATDYEDEEFPGAVPPSVGAR) is disordered. An O-linked (GalNAc...) threonine glycan is attached at threonine 2. Sulfotyrosine is present on tyrosine 4.

Heterohexamer; disulfide linked. Contains 2 sets of 3 non-identical chains (alpha, beta and gamma). The 2 heterotrimers are in head to head conformation with the N-termini in a small central domain. Post-translationally, conversion of fibrinogen to fibrin is triggered by thrombin, which cleaves fibrinopeptides A and B from alpha and beta chains, and thus exposes the N-terminal polymerization sites responsible for the formation of the soft clot.

It localises to the secreted. In terms of biological role, cleaved by the protease thrombin to yield monomers which, together with fibrinogen alpha (FGA) and fibrinogen gamma (FGG), polymerize to form an insoluble fibrin matrix. Fibrin has a major function in hemostasis as one of the primary components of blood clots. In addition, functions during the early stages of wound repair to stabilize the lesion and guide cell migration during re-epithelialization. Was originally thought to be essential for platelet aggregation, based on in vitro studies using anticoagulated blood. However subsequent studies have shown that it is not absolutely required for thrombus formation in vivo. Enhances expression of SELP in activated platelets. Maternal fibrinogen is essential for successful pregnancy. Fibrin deposition is also associated with infection, where it protects against IFNG-mediated hemorrhage. May also facilitate the antibacterial immune response via both innate and T-cell mediated pathways. The chain is Fibrinogen beta chain (FGB) from Elephas maximus (Indian elephant).